A 266-amino-acid polypeptide reads, in one-letter code: Zinc transport system ATP-binding protein TroB (266 aa).

Residues 11–243 enclose the ABC transporter domain; it reads VQVDDLTLAY…YVQRAYGGRI (233 aa). 43–50 contacts ATP; the sequence is GPNGAGKS.

The protein belongs to the ABC transporter superfamily.

In terms of biological role, part of an ATP-driven transport system TroABCD for zinc. The chain is Zinc transport system ATP-binding protein TroB (troB) from Treponema pallidum (strain Nichols).